The chain runs to 326 residues: MATSLKNRNFLKLLDYTPAEIQYLIDLAINLKAAKKSGNEKQTLVGKNIALIFEKSSTRTRCAFEVAAFDQGAQVTYIGPSGSQIGHKESMKDTARVLGRMYDGIEYRGYGQNIVEELGEFAGVPVWNGLTNEFHPTQILADLMTMLEHAPGKTLPELSFAYLGDARNNMGNSLMVGAAKMGMDIRLVAPKSFWPDEALVTQCREIASVTGARITLTEDVEEGVYDVDFLYTDVWVSMGEPKEAWAERVSLMAPYQINQQVITATRNPEVKFMHCLPAFHNEHTTVGREIEMAYGSKDWKLLKRFLNRPTLLFSMKQKTGCTPLKR.

Residues 57–60 (STRT), Q84, R108, and 135–138 (HPTQ) contribute to the carbamoyl phosphate site. Residues N169, D233, and 237 to 238 (SM) each bind L-ornithine. Residue 275-276 (CL) coordinates carbamoyl phosphate.

This sequence belongs to the aspartate/ornithine carbamoyltransferase superfamily. OTCase family.

Its subcellular location is the cytoplasm. It carries out the reaction carbamoyl phosphate + L-ornithine = L-citrulline + phosphate + H(+). Its pathway is amino-acid biosynthesis; L-arginine biosynthesis; L-arginine from L-ornithine and carbamoyl phosphate: step 1/3. Functionally, reversibly catalyzes the transfer of the carbamoyl group from carbamoyl phosphate (CP) to the N(epsilon) atom of ornithine (ORN) to produce L-citrulline. The chain is Ornithine carbamoyltransferase from Escherichia coli O6:K15:H31 (strain 536 / UPEC).